A 758-amino-acid polypeptide reads, in one-letter code: Ribosomal RNA processing protein 1 homolog B (758 aa).

Position 245 is a phosphoserine (Ser-245). Residues 259-272 (AVSKKKTALGKNHS) show a composition bias toward basic residues. The segment at 259-285 (AVSKKKTALGKNHSRKDGLSDERGRDD) is disordered. Residues 273 to 285 (RKDGLSDERGRDD) show a composition bias toward basic and acidic residues. Phosphoserine is present on residues Ser-350, Ser-392, Ser-394, and Ser-395. The tract at residues 381-598 (GSRVFCVEEE…KTASLKKRKK (218 aa)) is disordered. Residues 397-408 (QKRRRKKKKKHH) show a composition bias toward basic residues. The segment covering 447-457 (GAEATSSTGEE) has biased composition (low complexity). Ser-452 and Ser-458 each carry phosphoserine. A compositionally biased stretch (basic residues) spans 469–481 (HNKRKRPRKKSPR). Residues 498–513 (SQSGPSGSHPQGPRGS) are compositionally biased toward low complexity. Ser-513 is subject to Phosphoserine. Basic residues predominate over residues 566–575 (QRRRLQKKKA). At Ser-579 the chain carries Phosphoserine. N6-acetyllysine is present on Lys-652. The segment at 660–681 (KSSTATHPPGPAVQLNKTPSSS) is disordered. Residues Ser-702 and Ser-706 each carry the phosphoserine modification. The tract at residues 707–758 (PTGPSRVAFDPEQKPLHGVLKTPTSSPASSPLVAKKPLTTTPRRRPRAMDFF) is disordered. The residue at position 712 (Arg-712) is a Citrulline. Thr-728 bears the Phosphothreonine mark. Residues Ser-732, Ser-735, and Ser-736 each carry the phosphoserine modification.

It belongs to the RRP1 family. Interacts with the transcriptional activator E2F1. Interacts with serine/threonine-protein phosphatase PP1 subunits PPP1CB and PPP1CC but not with PPP1CA. Interacts with 60S ribosomal proteins RPL5 and RPL27, ribosomal processing protein RRP1/NNP1 and other nucleolar proteins including NOP2/NOL1 and FBL. Also interacts with nucleolar protein NPM1/B23. Interacts with splicing factor SRSF1 and with LUC7L3/CROP. Interacts with GTPase activator SIPA1. Interacts with CBX5/HP1alpha, H1-10, NCL, PARP1, TRIM28 and YBX3. In terms of assembly, (Microbial infection) Interacts with influenza A virus nucleoprotein NP and with RNA-directed RNA polymerase subunits PB1 and PB2. Post-translationally, citrullinated by PADI4.

It localises to the nucleus. It is found in the nucleolus. The protein localises to the nucleoplasm. The protein resides in the chromosome. Functionally, positively regulates DNA damage-induced apoptosis by acting as a transcriptional coactivator of proapoptotic target genes of the transcriptional activator E2F1. Likely to play a role in ribosome biogenesis by targeting serine/threonine protein phosphatase PP1 to the nucleolus. Involved in regulation of mRNA splicing. Inhibits SIPA1 GTPase activity. Involved in regulating expression of extracellular matrix genes. Associates with chromatin and may play a role in modulating chromatin structure. (Microbial infection) Following influenza A virus (IAV) infection, promotes viral mRNA transcription by facilitating the binding of IAV RNA-directed RNA polymerase to capped mRNA. In Homo sapiens (Human), this protein is Ribosomal RNA processing protein 1 homolog B (RRP1B).